A 534-amino-acid polypeptide reads, in one-letter code: Prolyl 4-hydroxylase subunit alpha-1 (534 aa).

A signal peptide spans 1-17; the sequence is MIWYILVVGILLPQSLA. Asparagine 113 carries N-linked (GlcNAc...) asparagine glycosylation. One copy of the TPR repeat lies at 205 to 238; the sequence is VSVLDYLSYAVYQQGDLDKALLLTKKLLELDPEH. A disordered region spans residues 258–277; that stretch reads ANKSSSDDQSDQKTTLKKKG. N-linked (GlcNAc...) asparagine glycosylation occurs at asparagine 259. The region spanning 411–519 is the Fe2OG dioxygenase domain; that stretch reads TAEELQVANY…KWVSNKWLHE (109 aa). The Fe cation site is built by histidine 429, aspartate 431, and histidine 500. A 2-oxoglutarate-binding site is contributed by lysine 510.

The protein belongs to the P4HA family. Heterotetramer of two alpha-1 chains and two beta chains (P4HB)(the beta chain is the multi-functional PDI), where P4HB plays the role of a structural subunit; this tetramer catalyzes the formation of 4-hydroxyproline in collagen. Fe(2+) serves as cofactor. The cofactor is L-ascorbate.

The protein resides in the endoplasmic reticulum lumen. It catalyses the reaction L-prolyl-[collagen] + 2-oxoglutarate + O2 = trans-4-hydroxy-L-prolyl-[collagen] + succinate + CO2. In terms of biological role, catalyzes the post-translational formation of 4-hydroxyproline in -Xaa-Pro-Gly- sequences in collagens and other proteins. The chain is Prolyl 4-hydroxylase subunit alpha-1 (P4HA1) from Bos taurus (Bovine).